A 582-amino-acid chain; its full sequence is MPLNTNNEKLTSKNVLNDRITKRFNDRRLFIVLLRFIIPSILVSFFAALYIFVDQIMIVKFVTRSDLNPDSIFDNDYFNFVDSNGQSWIYQDYLTASNNLKIPPFNINDLIRAAISISAPITVIINALTLLITMGLANQFSKALGRGDEEKIKEVWATGFITNVIVSIATSMIIVGVAKTWLTSSANGTMNRSLESLDTNSRYGYIVSIFFSRFRELQVQNASSYVYILAGLFTIQTFNQMYFLLNQSEGRQLFISIIPPLANLINILFDYLLIRYTSAGIAAAAYATVIGWSLSCLAYVIYNIVLIKKKATHLEYREIFRKGHFNWNYLYLIILIGLASFFRNAALSVSNGIFQTNLVTITEKIQPNLPPNYYQSIFGSVTPISNLMLQSVWGLIHGSRSLCGFKFGQRNFKDITKIYWYVPLIAFSYSSIVYLLFGFGLNNIFLINLFNIQGADNLVVSNLVLRITLVQSIFIALSMNAQLLFQSTQRIGMAWIASLMQGLFTFAPVFFTMYNLAIDTNNIYLYIWIQPINAILTCIGNWIISIPFAHKYREFVSKRFDIGTMLDKYLNKTKNPKVKAKQ.

The next 12 membrane-spanning stretches (helical) occupy residues 29 to 49 (LFIV…FAAL), 117 to 137 (ISAP…MGLA), 155 to 175 (VWAT…MIIV), 225 to 245 (YVYI…YFLL), 254 to 274 (FISI…YLLI), 287 to 307 (ATVI…IVLI), 329 to 349 (YLYL…ALSV), 376 to 396 (SIFG…WGLI), 432 to 452 (IVYL…LFNI), 458 to 478 (LVVS…IALS), 491 to 511 (IGMA…PVFF), and 523 to 543 (IYLY…GNWI).

Its subcellular location is the cell membrane. This is an uncharacterized protein from Mycoplasmoides gallisepticum (strain R(low / passage 15 / clone 2)) (Mycoplasma gallisepticum).